Here is a 326-residue protein sequence, read N- to C-terminus: Ficolin-1 (326 aa).

The N-terminal stretch at 1-29 (MELSRVAVALGPTGQLLLFLSFQTLAAQA) is a signal peptide. Residues 55-93 (GLPGAAGPKGEAGANGPKGERGSPGVVGKAGPAGPKGDR) form the Collagen-like domain. 2 stretches are compositionally biased toward low complexity: residues 61-71 (GPKGEAGANGP) and 78-89 (PGVVGKAGPAGP). The interval 61–110 (GPKGEAGANGPKGERGSPGVVGKAGPAGPKGDRGEKGARGEKGEPGQLQS) is disordered. Over residues 90–104 (KGDRGEKGARGEKGE) the composition is skewed to basic and acidic residues. The 218-residue stretch at 109 to 326 (QSCATGPRTC…QVSEMKVRLT (218 aa)) folds into the Fibrinogen C-terminal domain. 2 disulfides stabilise this stretch: Cys111–Cys139 and Cys118–Cys146. The interval 115–154 (PRTCKELLTRGHFLSGWHTIYLPDCQPLTVLCDMDTDGGG) is a domain; contributes to trimerization. Positions 155–243 (WTVFQRRSDG…LVLGGFLEGN (89 aa)) are b domain; contributes to trimerization. Ca(2+) contacts are provided by Asp262 and Asp264. Asn265 carries N-linked (GlcNAc...) asparagine glycosylation. An intrachain disulfide couples Cys270 to Cys283. 282-284 (ACH) provides a ligand contact to a carbohydrate. An N-linked (GlcNAc...) asparagine glycan is attached at Asn313. Residues 317–326 (QVSEMKVRLT) form a p domain region.

The protein belongs to the ficolin lectin family. Homotrimer. Interacts with elastin/ELN. Interacts (via Fibrinogen C-terminal domain) with FFAR2. Interacts with CRP; may regulate monocyte activation by FCN1. Most abundantly expressed in placenta and lung.

It is found in the secreted. It localises to the cell membrane. In terms of biological role, extracellular lectin functioning as a pattern-recognition receptor in innate immunity. Binds the sugar moieties of pathogen-associated molecular patterns (PAMPs) displayed on microbes and activates the lectin pathway of the complement system. May also activate monocytes through a G protein-coupled receptor, FFAR2, inducing the secretion of interleukin-8/IL-8. Binds preferentially to 9-O-acetylated 2-6-linked sialic acid derivatives and to various glycans containing sialic acid engaged in a 2-3 linkage. The polypeptide is Ficolin-1 (FCN1) (Sus scrofa (Pig)).